Here is a 242-residue protein sequence, read N- to C-terminus: Polycomb group RING finger protein 3 (242 aa).

An RING-type zinc finger spans residues 17–56 (CRLCNGYLIDATTVTECLHTFCRSCLVKYLEENNTCPTCR). The disordered stretch occupies residues 120 to 149 (EAHRNGETKTDEHTHKEPPEEKQEEDHDYH).

Component of a PRC1-like complex.

The protein resides in the nucleus. Functionally, component of a Polycomb group (PcG) multiprotein PRC1-like complex, a complex class required to maintain the transcriptionally repressive state of many genes, including Hox genes, throughout development. PcG PRC1 complex acts via chromatin remodeling and modification of histones; it mediates monoubiquitination of histone H2A 'Lys-119', rendering chromatin heritably changed in its expressibility. Within the PRC1-like complex, regulates RNF2 ubiquitin ligase activity. This is Polycomb group RING finger protein 3 (pcgf3) from Xenopus tropicalis (Western clawed frog).